The sequence spans 334 residues: Phosphoribosylformylglycinamidine cyclo-ligase (334 aa).

Belongs to the AIR synthase family.

Its subcellular location is the cytoplasm. The catalysed reaction is 2-formamido-N(1)-(5-O-phospho-beta-D-ribosyl)acetamidine + ATP = 5-amino-1-(5-phospho-beta-D-ribosyl)imidazole + ADP + phosphate + H(+). It participates in purine metabolism; IMP biosynthesis via de novo pathway; 5-amino-1-(5-phospho-D-ribosyl)imidazole from N(2)-formyl-N(1)-(5-phospho-D-ribosyl)glycinamide: step 2/2. This Pyrococcus horikoshii (strain ATCC 700860 / DSM 12428 / JCM 9974 / NBRC 100139 / OT-3) protein is Phosphoribosylformylglycinamidine cyclo-ligase.